A 996-amino-acid chain; its full sequence is Receptor-like protein kinase HSL1 (996 aa).

An N-terminal signal peptide occupies residues 1–15; it reads MYLLFLFLLFPTVFS. The Extracellular segment spans residues 16-618; sequence LNQDGFILQQ…ENEAKKRGYV (603 aa). 22 LRR repeats span residues 59 to 83, 84 to 107, 109 to 131, 133 to 154, 155 to 178, 179 to 203, 205 to 228, 229 to 252, 253 to 276, 278 to 299, 300 to 323, 325 to 347, 348 to 371, 373 to 395, 396 to 419, 421 to 443, 444 to 467, 468 to 491, 493 to 515, 516 to 539, 541 to 562, and 563 to 586; these read FSSVTSVDLSSANLAGPFPSVICRL, SNLAHLSLYNNSINSTLPLNIAAC, SLQTLDLSQNLLTGELPQTLADI, TLVHLDLTGNNFSGDIPASFGK, FENLEVLSLVYNLLDGTIPPFLGN, ISTLKMLNLSYNPFSPSRIPPEFGN, TNLEVMWLTECHLVGQIPDSLGQL, SKLVDLDLALNDLVGHIPPSLGGL, TNVVQIELYNNSLTGEIPPELGNL, SLRLLDASMNQLTGKIPDELCR, VPLESLNLYENNLEGELPASIALS, NLYEIRIFGNRLTGGLPKDLGLN, SPLRWLDVSENEFSGDLPADLCAK, ELEELLIIHNSFSGVIPESLADC, RSLTRIRLAYNRFSGSVPTGFWGL, HVNLLELVNNSFSGEISKSIGGA, SNLSLLILSNNEFTGSLPEEIGSL, DNLNQLSASGNKFSGSLPDSLMSL, ELGTLDLHGNQFSGELTSGIKSW, KKLNELNLADNEFTGKIPDEIGSL, VLNYLDLSGNMFSGKIPVSLQS, and LKLNQLNLSYNRLSGDLPPSLAKD. Residues Asn-93 and Asn-97 are each glycosylated (N-linked (GlcNAc...) asparagine). N-linked (GlcNAc...) asparagine glycosylation is found at Asn-143, Asn-178, Asn-186, and Asn-203. Residue Asn-262 is glycosylated (N-linked (GlcNAc...) asparagine). 2 N-linked (GlcNAc...) asparagine glycosylation sites follow: Asn-429 and Asn-445. The N-linked (GlcNAc...) asparagine glycan is linked to Asn-569. The chain crosses the membrane as a helical span at residues 619 to 639; the sequence is WLLRSIFVLAAMVLLAGVAWF. Topologically, residues 640-996 are cytoplasmic; sequence YFKYRTFKKA…EDTSDQGSIA (357 aa). Residues 676–962 enclose the Protein kinase domain; the sequence is LDEDNVIGAG…RRVVKMLQEI (287 aa). ATP-binding positions include 682–690 and Lys-704; that span reads IGAGASGKV. Phosphotyrosine is present on residues Tyr-764 and Tyr-802. Residue Asp-815 is the Proton acceptor of the active site. Phosphoserine is present on Ser-851. 2 positions are modified to phosphotyrosine: Tyr-859 and Tyr-866. Thr-867 is modified (phosphothreonine). The disordered stretch occupies residues 967 to 996; that stretch reads EDSLHKIRDDKDGKLTPYYNEDTSDQGSIA. The segment covering 968–980 has biased composition (basic and acidic residues); that stretch reads DSLHKIRDDKDGK.

This sequence belongs to the protein kinase superfamily. Ser/Thr protein kinase family.

The protein localises to the cell membrane. The catalysed reaction is L-seryl-[protein] + ATP = O-phospho-L-seryl-[protein] + ADP + H(+). It catalyses the reaction L-threonyl-[protein] + ATP = O-phospho-L-threonyl-[protein] + ADP + H(+). The polypeptide is Receptor-like protein kinase HSL1 (HSL1) (Arabidopsis thaliana (Mouse-ear cress)).